Here is a 484-residue protein sequence, read N- to C-terminus: MSEEKLPLLSPLNENDIENDYKDENLKSDLDKLSNVKKQSIIQRFKDYLKNSISKQTATVLVYVVLYILSGVINSLLLKKVMNVFTNYGFFLNQLTNYGYVPIFGAIVLYKILFTNDIPKDTRSFPQWKFVIMGALDAVTGYFVVIGGIKTTGPLQQLLNQSVIPFTMLLSFIFLKERYSLIQLGGALIIIGGVVVSLIPSLTGGNTSGNMLFYNFFYLISMIPYAFSNVYKAIGFSTVEDMDVWYLQYFDALYQSLVGTVLFPINNWLPPPSDMKFNQVIPQLKAGGKCLGGINTLIEQYNSTTGELLPTSCNYGDNLGCDNCHGAWVVVLIYMAVNVLYNVFILLVLKHAGATVFSIANTLRLPLTNIAFSFKFIMGSDSNPFSGLSVAGLCIILLGLGGYRVGSMIKQKKEAAASADSSSNTENKVIPKVFPTQFGEVSIIIKKKVPPKSQTHLRNQFFGKLGITVPESKLRNQNSIYGDQ.

At 1 to 57 (MSEEKLPLLSPLNENDIENDYKDENLKSDLDKLSNVKKQSIIQRFKDYLKNSISKQT) the chain is on the cytoplasmic side. The helical transmembrane segment at 58 to 78 (ATVLVYVVLYILSGVINSLLL) threads the bilayer. Residues 79–94 (KKVMNVFTNYGFFLNQ) lie on the Vacuolar side of the membrane. The helical transmembrane segment at 95–115 (LTNYGYVPIFGAIVLYKILFT) threads the bilayer. Residues 116 to 128 (NDIPKDTRSFPQW) are Cytoplasmic-facing. Residues 129 to 149 (KFVIMGALDAVTGYFVVIGGI) form a helical membrane-spanning segment. Residues 150–154 (KTTGP) are Vacuolar-facing. A helical transmembrane segment spans residues 155-175 (LQQLLNQSVIPFTMLLSFIFL). Residues 176–178 (KER) lie on the Cytoplasmic side of the membrane. The helical transmembrane segment at 179–199 (YSLIQLGGALIIIGGVVVSLI) threads the bilayer. At 200-210 (PSLTGGNTSGN) the chain is on the vacuolar side. N-linked (GlcNAc...) asparagine glycosylation occurs at N206. The chain crosses the membrane as a helical span at residues 211–231 (MLFYNFFYLISMIPYAFSNVY). The Cytoplasmic portion of the chain corresponds to 232–244 (KAIGFSTVEDMDV). A helical membrane pass occupies residues 245-265 (WYLQYFDALYQSLVGTVLFPI). Residues 266-328 (NNWLPPPSDM…LGCDNCHGAW (63 aa)) lie on the Vacuolar side of the membrane. Residue N302 is glycosylated (N-linked (GlcNAc...) asparagine). The helical transmembrane segment at 329–349 (VVVLIYMAVNVLYNVFILLVL) threads the bilayer. The Cytoplasmic portion of the chain corresponds to 350-355 (KHAGAT). Residues 356–378 (VFSIANTLRLPLTNIAFSFKFIM) form a helical membrane-spanning segment. Residues 379–382 (GSDS) lie on the Vacuolar side of the membrane. Residues 383-403 (NPFSGLSVAGLCIILLGLGGY) form a helical membrane-spanning segment. Residues 404–484 (RVGSMIKQKK…RNQNSIYGDQ (81 aa)) are Cytoplasmic-facing.

It belongs to the CRT-like transporter family.

Its subcellular location is the vacuole membrane. Functionally, nutrient transporter. Involved in maintaining the osmotic homeostasis of the digestive vacuole. The protein is Crt homolog 2 (crtp2) of Dictyostelium discoideum (Social amoeba).